We begin with the raw amino-acid sequence, 464 residues long: 3-isopropylmalate dehydratase large subunit (464 aa).

Residues cysteine 337, cysteine 397, and cysteine 400 each contribute to the [4Fe-4S] cluster site.

This sequence belongs to the aconitase/IPM isomerase family. LeuC type 1 subfamily. As to quaternary structure, heterodimer of LeuC and LeuD. The cofactor is [4Fe-4S] cluster.

The enzyme catalyses (2R,3S)-3-isopropylmalate = (2S)-2-isopropylmalate. It participates in amino-acid biosynthesis; L-leucine biosynthesis; L-leucine from 3-methyl-2-oxobutanoate: step 2/4. Functionally, catalyzes the isomerization between 2-isopropylmalate and 3-isopropylmalate, via the formation of 2-isopropylmaleate. The sequence is that of 3-isopropylmalate dehydratase large subunit from Bacillus thuringiensis subsp. konkukian (strain 97-27).